A 345-amino-acid polypeptide reads, in one-letter code: Dihydroorotase (345 aa).

2 residues coordinate Zn(2+): H13 and H15. Substrate-binding positions include 15 to 17 and N41; that span reads HLR. Zn(2+)-binding residues include K99, H136, and H174. K99 carries the post-translational modification N6-carboxylysine. Substrate is bound at residue H136. L219 contributes to the substrate binding site. A Zn(2+)-binding site is contributed by D247. D247 is an active-site residue. Residues H251 and A263 each contribute to the substrate site.

It belongs to the metallo-dependent hydrolases superfamily. DHOase family. Class II DHOase subfamily. As to quaternary structure, homodimer. The cofactor is Zn(2+).

It carries out the reaction (S)-dihydroorotate + H2O = N-carbamoyl-L-aspartate + H(+). The protein operates within pyrimidine metabolism; UMP biosynthesis via de novo pathway; (S)-dihydroorotate from bicarbonate: step 3/3. Its function is as follows. Catalyzes the reversible cyclization of carbamoyl aspartate to dihydroorotate. This chain is Dihydroorotase, found in Agrobacterium fabrum (strain C58 / ATCC 33970) (Agrobacterium tumefaciens (strain C58)).